We begin with the raw amino-acid sequence, 175 residues long: Movement protein (175 aa).

The interval 30 to 47 (ADLDDDEEVTTGQEELFL) is homodimerization. The interval 50–156 (EQVRARHLFS…QRLTSTERNG (107 aa)) is RNA-binding. Phosphoserine occurs at positions 64 and 133. 2 stretches are compositionally biased toward polar residues: residues 116–141 (SLTS…SQSP) and 148–169 (RLTS…SSTK). The segment at 116–175 (SLTSWTHTVNSTPFPQLSTSSGSQSPGKGRLQRLTSTERNGTTLPRTNSGSSTKAMVLHR) is disordered.

This sequence belongs to the polerovirus movement protein family. Homodimer. Post-translationally, phosphorylated.

It localises to the host cell junction. The protein localises to the host plasmodesma. The protein resides in the host Golgi apparatus. In terms of biological role, together with movement protein P3a, facilitates long-distance movement of virions in host. Transports viral genome to neighboring plant cells directly through plasmosdesmata, without any budding. The movement protein allows efficient cell to cell propagation, by bypassing the host cell wall barrier. Binds ssRNA. The protein is Movement protein of Turnip yellows virus (isolate FL-1) (TuYV).